Reading from the N-terminus, the 108-residue chain is UPF0145 protein Tmel_1129 (108 aa).

Belongs to the UPF0145 family.

This is UPF0145 protein Tmel_1129 from Thermosipho melanesiensis (strain DSM 12029 / CIP 104789 / BI429).